We begin with the raw amino-acid sequence, 102 residues long: Integration host factor subunit alpha (102 aa).

The disordered stretch occupies residues 49–70; the sequence is FGNFQLRTKPQRPGRNPKTGEE.

Belongs to the bacterial histone-like protein family. In terms of assembly, heterodimer of an alpha and a beta chain.

In terms of biological role, this protein is one of the two subunits of integration host factor, a specific DNA-binding protein that functions in genetic recombination as well as in transcriptional and translational control. This Nitrosomonas europaea (strain ATCC 19718 / CIP 103999 / KCTC 2705 / NBRC 14298) protein is Integration host factor subunit alpha.